Here is a 932-residue protein sequence, read N- to C-terminus: RNA-binding protein 12 (932 aa).

Positions 97–116 are disordered; the sequence is IPPANASRSGPPPSSGMSGR. Residues 98–116 are compositionally biased toward low complexity; it reads PPANASRSGPPPSSGMSGR. The 76-residue stretch at 304-379 folds into the RRM 1 domain; that stretch reads LYVSVHGMPF…RYVEVSPATE (76 aa). A phosphoserine mark is found at serine 352 and serine 375. Composition is skewed to polar residues over residues 392–401 and 408–417; these read KQNMGPSGQT and LPRSKSPSGQ. The disordered stretch occupies residues 392 to 424; it reads KQNMGPSGQTHPPPQTLPRSKSPSGQKRSRSRS. A phosphoserine mark is found at serine 420, serine 422, and serine 424. In terms of domain architecture, RRM 2 spans 430–507; that stretch reads FCVYLKGLPF…RFIQVHPITK (78 aa). Position 525 is a phosphoserine (serine 525). A compositionally biased stretch (low complexity) spans 717–734; the sequence is NGPPFNFPGNFGGSNAFG. Residues 717-855 are disordered; sequence NGPPFNFPGN…PGFASSSGKP (139 aa). The span at 783–811 shows a compositional bias: gly residues; sequence SGFGGGPQNFGNGPGSLGGPPGFGSGPPG. A compositionally biased stretch (pro residues) spans 824–838; it reads AFGPGPGPGPGPGPG. The RRM 3 domain maps to 856–932; the sequence is GPTVIKVQNM…PIGSRKVNLY (77 aa).

Its subcellular location is the nucleus. In Pongo abelii (Sumatran orangutan), this protein is RNA-binding protein 12 (RBM12).